Reading from the N-terminus, the 815-residue chain is Plakophilin-2 (815 aa).

The segment covering 1–12 (MLKPHPEHKEQP) has biased composition (basic and acidic residues). Disordered stretches follow at residues 1-31 (MLKP…MAEE) and 76-105 (QLTL…ISSS). Residues 13–25 (QDSFTPSGDSTPD) show a composition bias toward polar residues. Low complexity predominate over residues 91 to 105 (SSLAESQSSCQISSS). ARM repeat units lie at residues 317–357 (KGKP…NQCF), 360–399 (PDAK…NIVF), 402–442 (NENK…NLSS), 457–498 (PLTD…NLSS), 501–547 (PDGR…NLSY), 604–644 (PHGV…NLTA), 652–691 (AIAH…NISR), 693–737 (RELH…NLSQ), and 740–783 (ASNT…TLWR).

This sequence belongs to the beta-catenin family.

The protein localises to the nucleus. It is found in the cell junction. The protein resides in the desmosome. It localises to the cytoplasm. In terms of biological role, required for development of the heart, potentially via cell-cell adhesion and modulation of expression of cardiac precursor genes. Plays a role in desmosome cell-cell junctions and their intracellular connectivity. In Danio rerio (Zebrafish), this protein is Plakophilin-2.